The following is a 269-amino-acid chain: Putative pyruvate, phosphate dikinase regulatory protein (269 aa).

Glycine 147 to threonine 154 lines the ADP pocket.

It belongs to the pyruvate, phosphate/water dikinase regulatory protein family. PDRP subfamily.

It catalyses the reaction N(tele)-phospho-L-histidyl/L-threonyl-[pyruvate, phosphate dikinase] + ADP = N(tele)-phospho-L-histidyl/O-phospho-L-threonyl-[pyruvate, phosphate dikinase] + AMP + H(+). The catalysed reaction is N(tele)-phospho-L-histidyl/O-phospho-L-threonyl-[pyruvate, phosphate dikinase] + phosphate + H(+) = N(tele)-phospho-L-histidyl/L-threonyl-[pyruvate, phosphate dikinase] + diphosphate. Functionally, bifunctional serine/threonine kinase and phosphorylase involved in the regulation of the pyruvate, phosphate dikinase (PPDK) by catalyzing its phosphorylation/dephosphorylation. This is Putative pyruvate, phosphate dikinase regulatory protein from Trichlorobacter lovleyi (strain ATCC BAA-1151 / DSM 17278 / SZ) (Geobacter lovleyi).